A 528-amino-acid polypeptide reads, in one-letter code: GMP synthase [glutamine-hydrolyzing] (528 aa).

The 192-residue stretch at S13 to D204 folds into the Glutamine amidotransferase type-1 domain. C90 serves as the catalytic Nucleophile. Active-site residues include H178 and E180. A GMPS ATP-PPase domain is found at W205–R403. S232–S238 provides a ligand contact to ATP.

As to quaternary structure, homodimer.

The enzyme catalyses XMP + L-glutamine + ATP + H2O = GMP + L-glutamate + AMP + diphosphate + 2 H(+). The protein operates within purine metabolism; GMP biosynthesis; GMP from XMP (L-Gln route): step 1/1. Catalyzes the synthesis of GMP from XMP. This chain is GMP synthase [glutamine-hydrolyzing], found in Prochlorococcus marinus (strain MIT 9312).